The chain runs to 98 residues: Biogenesis of lysosome-related organelles complex 1 subunit SNN1 (98 aa).

Positions 55–98 (MDEQELLQEEGSLKEELARVNQLKKRLDKLTELYAELARKCGAL) form a coiled coil.

The protein belongs to the SNAPIN family. As to quaternary structure, component of the biogenesis of lysosome-related organelles complex-1 (BLOC-1).

It localises to the endosome. In terms of biological role, component of the biogenesis of lysosome-related organelles complex-1 (BLOC-1), a complex involved in endosomal cargo sorting. The chain is Biogenesis of lysosome-related organelles complex 1 subunit SNN1 (SNN1) from Eremothecium gossypii (strain ATCC 10895 / CBS 109.51 / FGSC 9923 / NRRL Y-1056) (Yeast).